We begin with the raw amino-acid sequence, 504 residues long: 5-epiaristolochene 1,3-dihydroxylase (504 aa).

Residues 2 to 22 (QFFSLVSIFLFLSFLFLLRKW) traverse the membrane as a helical segment. Cys-442 lines the heme pocket.

It belongs to the cytochrome P450 family. Heme serves as cofactor.

It is found in the membrane. It carries out the reaction (+)-5-epi-aristolochene + 2 reduced [NADPH--hemoprotein reductase] + 2 O2 = capsidiol + 2 oxidized [NADPH--hemoprotein reductase] + 2 H2O + 2 H(+). Inhibited by ancymidol and ketoconazole. Involved in the biosynthesis of capsidiol. Catalyzes the successive and independent hydroxylations at the C1 and C3 positions of 5-epiaristolochene. The second hydroxylation step is 8-fold more efficient than the first hydroxylation reaction. Capable of utilizing premnaspirodiene as a substrate. This chain is 5-epiaristolochene 1,3-dihydroxylase (CYP71D20), found in Nicotiana tabacum (Common tobacco).